A 398-amino-acid polypeptide reads, in one-letter code: Lysophospholipid transporter LplT (398 aa).

The next 11 helical transmembrane spans lie at 17–37 (AVLV…FAIL), 52–72 (ILQI…GQIA), 90–110 (LGAF…LVGV), 137–157 (GLME…GGFL), 163–183 (AIAL…NFFI), 226–246 (LFWG…PVVL), 256–276 (ILNV…ARFI), 285–305 (MPAG…HSIW), 309–329 (VLLI…NALL), 352–372 (IAML…VPVV), and 373–393 (TTGI…WIWN).

The protein belongs to the major facilitator superfamily. LplT (TC 2.A.1.42) family.

It localises to the cell inner membrane. Functionally, catalyzes the facilitated diffusion of 2-acyl-glycero-3-phosphoethanolamine (2-acyl-GPE) into the cell. This Photorhabdus laumondii subsp. laumondii (strain DSM 15139 / CIP 105565 / TT01) (Photorhabdus luminescens subsp. laumondii) protein is Lysophospholipid transporter LplT.